The sequence spans 103 residues: Alpha-ketoglutarate dehydrogenase component 4 (103 aa).

M1 carries the N-acetylmethionine modification. N6-succinyllysine is present on K5. The segment at 20–69 (TPLIRFPDRRDNPKPNVSEALRSAGLPSHSSVISQHSKGSKSPDLLMYQG) is disordered. Over residues 47 to 56 (SHSSVISQHS) the composition is skewed to polar residues. Phosphoserine occurs at positions 49, 61, and 90.

Belongs to the alpha-ketoglutarate dehydrogenase component 4 family. Component of the 2-oxoglutarate dehydrogenase complex (OGDHC), composed of OGDH (2-oxoglutarate dehydrogenase; also called E1 subunit), DLST (dihydrolipoamide succinyltransferase; also called E2 subunit) and DLD (dihydrolipoamide dehydrogenase; also called E3 subunit), and the assembly factor KGD4. Within OGDHC complex, interacts (via N-terminus) with E3 subunit and (via C-terminus) with E2 subunit.

The protein resides in the mitochondrion. Its function is as follows. Molecular adapter that is necessary to form a stable 2-oxoglutarate dehydrogenase enzyme complex (OGDHC). Enables the specific recruitment of E3 subunit to E2 subunit in the 2-oxoglutarate dehydrogenase complex (OGDHC). In Homo sapiens (Human), this protein is Alpha-ketoglutarate dehydrogenase component 4.